A 152-amino-acid chain; its full sequence is UPF0266 membrane protein YobD (152 aa).

The next 3 membrane-spanning stretches (helical) occupy residues 6–26 (LVLI…QFIM), 45–65 (IDSV…VTNH), and 67–87 (ALIT…IFWI).

Belongs to the UPF0266 family.

It is found in the cell inner membrane. In Shigella boydii serotype 18 (strain CDC 3083-94 / BS512), this protein is UPF0266 membrane protein YobD.